A 431-amino-acid polypeptide reads, in one-letter code: Serine hydroxymethyltransferase (431 aa).

(6S)-5,6,7,8-tetrahydrofolate is bound by residues Leu128 and 132–134 (GHL). Position 237 is an N6-(pyridoxal phosphate)lysine (Lys237).

The protein belongs to the SHMT family. As to quaternary structure, homodimer. Pyridoxal 5'-phosphate is required as a cofactor.

The protein localises to the cytoplasm. The enzyme catalyses (6R)-5,10-methylene-5,6,7,8-tetrahydrofolate + glycine + H2O = (6S)-5,6,7,8-tetrahydrofolate + L-serine. It participates in one-carbon metabolism; tetrahydrofolate interconversion. Its pathway is amino-acid biosynthesis; glycine biosynthesis; glycine from L-serine: step 1/1. Functionally, catalyzes the reversible interconversion of serine and glycine with tetrahydrofolate (THF) serving as the one-carbon carrier. This reaction serves as the major source of one-carbon groups required for the biosynthesis of purines, thymidylate, methionine, and other important biomolecules. Also exhibits THF-independent aldolase activity toward beta-hydroxyamino acids, producing glycine and aldehydes, via a retro-aldol mechanism. The sequence is that of Serine hydroxymethyltransferase from Ruegeria sp. (strain TM1040) (Silicibacter sp.).